The chain runs to 234 residues: Isoprenyl transferase (234 aa).

D13 is an active-site residue. Residue D13 participates in Mg(2+) binding. Substrate contacts are provided by residues 14-17 (GNGR), W18, R26, H30, and 58-60 (STE). Residue N61 is the Proton acceptor of the active site. Residues W62, R64, R180, and 186–188 (RLS) each bind substrate. E199 contributes to the Mg(2+) binding site.

The protein belongs to the UPP synthase family. As to quaternary structure, homodimer. The cofactor is Mg(2+).

Catalyzes the condensation of isopentenyl diphosphate (IPP) with allylic pyrophosphates generating different type of terpenoids. In Helicobacter pylori (strain ATCC 700392 / 26695) (Campylobacter pylori), this protein is Isoprenyl transferase (uppS).